The primary structure comprises 217 residues: uncharacterized protein (217 aa).

Positions 59 to 76 are enriched in polar residues; sequence AQSTIQRTSSLPVPSSSN. Disordered stretches follow at residues 59 to 105 and 124 to 217; these read AQST…ETAN and KKSL…HISK. Phosphoserine is present on Ser68. Thr92 is subject to Phosphothreonine. Residues 124–135 are compositionally biased toward basic and acidic residues; that stretch reads KKSLERRVREEQ. Acidic residues predominate over residues 136-147; the sequence is EEKTDNEDDNDV. Over residues 148–157 the composition is skewed to polar residues; it reads EISTQESLEN. Residues 173–188 are compositionally biased toward acidic residues; sequence LEDDIEGQEFSFDDQD. The span at 199-217 shows a compositional bias: polar residues; the sequence is WLSSQKQQGSPLTSDHISK.

This is an uncharacterized protein from Schizosaccharomyces pombe (strain 972 / ATCC 24843) (Fission yeast).